Reading from the N-terminus, the 217-residue chain is tRNA (guanine-N(7)-)-methyltransferase (217 aa).

S-adenosyl-L-methionine is bound by residues Glu-43, Asp-68, Asn-101, and Asn-123. Lys-127 is a binding site for substrate. Positions 129–134 are interaction with RNA; sequence RHNKRR. Substrate-binding positions include Asp-159 and 196 to 199; that span reads TEYE.

Belongs to the class I-like SAM-binding methyltransferase superfamily. TrmB family.

It carries out the reaction guanosine(46) in tRNA + S-adenosyl-L-methionine = N(7)-methylguanosine(46) in tRNA + S-adenosyl-L-homocysteine. It functions in the pathway tRNA modification; N(7)-methylguanine-tRNA biosynthesis. Functionally, catalyzes the formation of N(7)-methylguanine at position 46 (m7G46) in tRNA. This chain is tRNA (guanine-N(7)-)-methyltransferase, found in Clostridium botulinum (strain Loch Maree / Type A3).